We begin with the raw amino-acid sequence, 340 residues long: Anthranilate phosphoribosyltransferase (340 aa).

5-phospho-alpha-D-ribose 1-diphosphate is bound by residues glycine 79, 82–83 (GD), serine 87, 89–92 (NIST), 107–115 (KHGNRSVSS), and serine 119. Residue glycine 79 participates in anthranilate binding. Serine 91 lines the Mg(2+) pocket. Anthranilate is bound at residue asparagine 110. Residue arginine 165 participates in anthranilate binding. Residues aspartate 224 and glutamate 225 each contribute to the Mg(2+) site.

The protein belongs to the anthranilate phosphoribosyltransferase family. As to quaternary structure, homodimer. Mg(2+) is required as a cofactor.

It carries out the reaction N-(5-phospho-beta-D-ribosyl)anthranilate + diphosphate = 5-phospho-alpha-D-ribose 1-diphosphate + anthranilate. It participates in amino-acid biosynthesis; L-tryptophan biosynthesis; L-tryptophan from chorismate: step 2/5. Its function is as follows. Catalyzes the transfer of the phosphoribosyl group of 5-phosphorylribose-1-pyrophosphate (PRPP) to anthranilate to yield N-(5'-phosphoribosyl)-anthranilate (PRA). This Oceanobacillus iheyensis (strain DSM 14371 / CIP 107618 / JCM 11309 / KCTC 3954 / HTE831) protein is Anthranilate phosphoribosyltransferase.